The primary structure comprises 406 residues: MAENGTDCEQRRVGMPKEQNNGSFQDPSFMCNRKRRDREERQSIVLWRKPLITLQYFILEVLINLKEWSVRLWHRRMMVVSVLLLLAVLSVAYYIEGEHQQCVQYIEKKCLWCAYWVGLGILSSVGLGTGLHTFLLYLGPHIASVTIAAYECNSVNFPEPPYPDEIICPDEEGTEGAISLWTIISKVRLEACMWGAGTAIGELPPYFMARAARLSGVETDDEEYAEFEEMLEHAQTAQDFATRAKLTVQNLVQKVGFLGILACASIPNPLFDLAGITCGHFLVPFWTFFGATLIGKAIIKMHIQKLFVIITFSKHIVEQMVSLIGVIPSIGPSLQKPFQEYLEAQRKKLHHKGDSGTPQSENWLSWAFEKLVIIMVFYFILSIINSMAQSYAKRVQQKKLSVEKTK.

Residues 1–22 (MAENGTDCEQRRVGMPKEQNNG) form a disordered region. Residues 1–42 (MAENGTDCEQRRVGMPKEQNNGSFQDPSFMCNRKRRDREERQ) are Cytoplasmic-facing. A helical transmembrane segment spans residues 43–63 (SIVLWRKPLITLQYFILEVLI). The Extracellular segment spans residues 64–76 (NLKEWSVRLWHRR). Residues 77–97 (MMVVSVLLLLAVLSVAYYIEG) traverse the membrane as a helical segment. At 98–110 (EHQQCVQYIEKKC) the chain is on the cytoplasmic side. A helical membrane pass occupies residues 111-131 (LWCAYWVGLGILSSVGLGTGL). Residues 132–250 (HTFLLYLGPH…ATRAKLTVQN (119 aa)) lie on the Extracellular side of the membrane. Residues 173–316 (GTEGAISLWT…FVIITFSKHI (144 aa)) form a VTT domain region. Residues 251-271 (LVQKVGFLGILACASIPNPLF) form a helical membrane-spanning segment. Topologically, residues 272–273 (DL) are cytoplasmic. The helical transmembrane segment at 274-294 (AGITCGHFLVPFWTFFGATLI) threads the bilayer. Topologically, residues 295–306 (GKAIIKMHIQKL) are extracellular. Residues 307 to 327 (FVIITFSKHIVEQMVSLIGVI) form a helical membrane-spanning segment. The Cytoplasmic segment spans residues 328–363 (PSIGPSLQKPFQEYLEAQRKKLHHKGDSGTPQSENW). Residues 364–384 (LSWAFEKLVIIMVFYFILSII) form a helical membrane-spanning segment. Over 385 to 406 (NSMAQSYAKRVQQKKLSVEKTK) the chain is Extracellular.

The protein belongs to the VMP1 family.

The protein resides in the endoplasmic reticulum-Golgi intermediate compartment membrane. The protein localises to the cell membrane. Its subcellular location is the vacuole membrane. It localises to the endoplasmic reticulum membrane. It carries out the reaction a 1,2-diacyl-sn-glycero-3-phospho-L-serine(in) = a 1,2-diacyl-sn-glycero-3-phospho-L-serine(out). The catalysed reaction is cholesterol(in) = cholesterol(out). It catalyses the reaction a 1,2-diacyl-sn-glycero-3-phosphocholine(in) = a 1,2-diacyl-sn-glycero-3-phosphocholine(out). The enzyme catalyses a 1,2-diacyl-sn-glycero-3-phosphoethanolamine(in) = a 1,2-diacyl-sn-glycero-3-phosphoethanolamine(out). In terms of biological role, phospholipid scramblase involved in lipid homeostasis and membrane dynamics processes. Has phospholipid scramblase activity toward cholesterol and phosphatidylserine, as well as phosphatidylethanolamine and phosphatidylcholine. Required for autophagosome formation: participates in early stages of autophagosome biogenesis at the endoplasmic reticulum (ER) membrane by reequilibrating the leaflets of the ER as lipids are extracted by atg2 (atg2a or atg2b) to mediate autophagosome assembly. In addition to autophagy, involved in other processes in which phospholipid scramblase activity is required. Modulates ER contacts with lipid droplets, mitochondria and endosomes. The chain is Vacuole membrane protein 1 from Xenopus laevis (African clawed frog).